Consider the following 329-residue polypeptide: o-succinylbenzoate synthase (329 aa).

Catalysis depends on Lys140, which acts as the Proton donor. The Mg(2+) site is built by Asp168, Glu197, and Asp220. Lys242 (proton acceptor) is an active-site residue.

This sequence belongs to the mandelate racemase/muconate lactonizing enzyme family. MenC type 1 subfamily. It depends on a divalent metal cation as a cofactor.

It catalyses the reaction (1R,6R)-6-hydroxy-2-succinyl-cyclohexa-2,4-diene-1-carboxylate = 2-succinylbenzoate + H2O. Its pathway is quinol/quinone metabolism; 1,4-dihydroxy-2-naphthoate biosynthesis; 1,4-dihydroxy-2-naphthoate from chorismate: step 4/7. The protein operates within quinol/quinone metabolism; menaquinone biosynthesis. Functionally, converts 2-succinyl-6-hydroxy-2,4-cyclohexadiene-1-carboxylate (SHCHC) to 2-succinylbenzoate (OSB). The polypeptide is o-succinylbenzoate synthase (Haemophilus influenzae (strain ATCC 51907 / DSM 11121 / KW20 / Rd)).